The chain runs to 474 residues: PRAME family member 10 (474 aa).

An LRR 1; degenerate repeat occupies 97 to 124 (RWKLQVLDLRDVDENFWTIWSGARVLSC). The stretch at 179 to 203 (HLCCSKVQNYSMPTSSFRNLLERIY) is one LRR 2; degenerate repeat. An LRR 3; degenerate repeat occupies 204 to 230 (PDSIQELEVWKKCSLNKTGKFAPYLSQ). Residues 231 to 265 (MSNLRELFLAFGYERELYVSVQWPCIPDLDSPFLC) form an LRR 4; degenerate repeat. LRR repeat units follow at residues 266-291 (LYYP…LRYL), 292-323 (KNPL…SQLK), 324-342 (ELRL…PLGV), 348-375 (AATL…ALSH), and 376-400 (CSQL…LLRH).

Belongs to the PRAME family.

The polypeptide is PRAME family member 10 (Homo sapiens (Human)).